Reading from the N-terminus, the 171-residue chain is Phosphopantetheine adenylyltransferase (171 aa).

Substrate is bound at residue Thr-10. Residues 10–11 (TF) and His-18 each bind ATP. Positions 42, 74, and 88 each coordinate substrate. Residues 89 to 91 (GLR), Glu-99, and 124 to 130 (WACLSSK) contribute to the ATP site.

This sequence belongs to the bacterial CoaD family. In terms of assembly, homohexamer. The cofactor is Mg(2+).

The protein localises to the cytoplasm. It carries out the reaction (R)-4'-phosphopantetheine + ATP + H(+) = 3'-dephospho-CoA + diphosphate. Its pathway is cofactor biosynthesis; coenzyme A biosynthesis; CoA from (R)-pantothenate: step 4/5. Reversibly transfers an adenylyl group from ATP to 4'-phosphopantetheine, yielding dephospho-CoA (dPCoA) and pyrophosphate. This chain is Phosphopantetheine adenylyltransferase, found in Blochmanniella pennsylvanica (strain BPEN).